The sequence spans 129 residues: Small ribosomal subunit protein uS11 (129 aa).

Belongs to the universal ribosomal protein uS11 family. As to quaternary structure, part of the 30S ribosomal subunit. Interacts with proteins S7 and S18. Binds to IF-3.

Its function is as follows. Located on the platform of the 30S subunit, it bridges several disparate RNA helices of the 16S rRNA. Forms part of the Shine-Dalgarno cleft in the 70S ribosome. This Rhizobium etli (strain CIAT 652) protein is Small ribosomal subunit protein uS11.